The chain runs to 382 residues: Dual-specificity RNA methyltransferase RlmN (382 aa).

E95 functions as the Proton acceptor in the catalytic mechanism. The Radical SAM core domain maps to 101-348; that stretch reads EDDRGTLCIS…TTVRKTRGDD (248 aa). Residues C108 and C353 are joined by a disulfide bond. Positions 115, 119, and 122 each coordinate [4Fe-4S] cluster. Residues 179–180, S211, 233–235, and N310 each bind S-adenosyl-L-methionine; these read GE and SLH. The S-methylcysteine intermediate role is filled by C353.

The protein belongs to the radical SAM superfamily. RlmN family. It depends on [4Fe-4S] cluster as a cofactor.

It localises to the cytoplasm. The enzyme catalyses adenosine(2503) in 23S rRNA + 2 reduced [2Fe-2S]-[ferredoxin] + 2 S-adenosyl-L-methionine = 2-methyladenosine(2503) in 23S rRNA + 5'-deoxyadenosine + L-methionine + 2 oxidized [2Fe-2S]-[ferredoxin] + S-adenosyl-L-homocysteine. The catalysed reaction is adenosine(37) in tRNA + 2 reduced [2Fe-2S]-[ferredoxin] + 2 S-adenosyl-L-methionine = 2-methyladenosine(37) in tRNA + 5'-deoxyadenosine + L-methionine + 2 oxidized [2Fe-2S]-[ferredoxin] + S-adenosyl-L-homocysteine. In terms of biological role, specifically methylates position 2 of adenine 2503 in 23S rRNA and position 2 of adenine 37 in tRNAs. m2A2503 modification seems to play a crucial role in the proofreading step occurring at the peptidyl transferase center and thus would serve to optimize ribosomal fidelity. This is Dual-specificity RNA methyltransferase RlmN from Bordetella pertussis (strain Tohama I / ATCC BAA-589 / NCTC 13251).